Reading from the N-terminus, the 315-residue chain is Tryptophan prenyltransferase ComQ (315 aa).

Mg(2+) contacts are provided by Asp-95 and Asp-99.

Belongs to the FPP/GGPP synthase family. The cofactor is Mg(2+).

The protein localises to the cell membrane. The catalysed reaction is L-tryptophyl-[protein] + (2E,6E)-farnesyl diphosphate = (2S,3R)-3-farnesyl-2,3-dihydro-2,N(alpha)-cyclo-L-tryptophyl-[protein] + diphosphate. Functionally, part of a major quorum-sensing system that regulates the development of genetic competence. Involved in the maturation of the competence pheromone ComX. Acts by catalyzing the transfer of a farnesyl group on the ComX pheromone. In vitro, can also catalyze the farnesylation of single tryptophan and tryptophan derivatives. In Bacillus subtilis subsp. natto (strain BEST195), this protein is Tryptophan prenyltransferase ComQ.